The following is a 577-amino-acid chain: MFS-type transporter CPUR_05422 (577 aa).

Residues 1–49 (MSAMSAMGKPEHGSATTSDLEHRATESSLEKQDVEAAPPGPVKPVDPSP) are disordered. Basic and acidic residues predominate over residues 19-34 (DLEHRATESSLEKQDV). Positions 38–47 (PPGPVKPVDP) are enriched in pro residues. The next 14 helical transmembrane spans lie at 52–72 (STLK…LVAV), 93–113 (DVGW…LLFG), 123–143 (VVLL…GAAP), 157–177 (VGSA…IPLA), 184–204 (GLMG…GGAF), 212–232 (WCFY…FFYF), 249–269 (ILSL…CLLL), 285–305 (IIVL…VQIC), 326–346 (FLTT…IPIW), 359–379 (GIQL…GGLL), 383–403 (IGYY…GAGL), 416–436 (VIGY…TPNL), 449–469 (MGIA…VAVG), and 525–545 (VFIV…CMEW). Positions 554-577 (PPAGPPAGAPTESAPVETKAAGHT) are disordered.

This sequence belongs to the major facilitator superfamily. TCR/Tet family.

The protein resides in the membrane. Its function is as follows. MFS-type transporter; part of the ergochrome gene cluster responsible for the typical purple-black color of the ergot sclerotia. The ergochrome gene cluster produces several ergot pigments including the yellow ergochrome secalonic acid and its derivatives, as well as the red anthraquinones endocrocin and clavorubin. The sequence is that of MFS-type transporter CPUR_05422 from Claviceps purpurea (strain 20.1) (Ergot fungus).